We begin with the raw amino-acid sequence, 347 residues long: Microfibril-associated glycoprotein 3 (347 aa).

Residues Met-1–Leu-22 form the signal peptide. At Glu-23 to Asp-139 the chain is on the extracellular side. N-linked (GlcNAc...) asparagine glycans are attached at residues Asn-31, Asn-36, Asn-63, and Asn-103. The 84-residue stretch at Ala-47 to Thr-130 folds into the Ig-like C2-type domain. A disulfide bridge links Cys-68 with Cys-117. The helical transmembrane segment at Met-140–Val-160 threads the bilayer. Residues Thr-161–Glu-347 lie on the Cytoplasmic side of the membrane. The disordered stretch occupies residues Asn-280–Glu-347. Positions Val-311–Ser-331 are enriched in polar residues.

Post-translationally, glycosylated.

The protein resides in the cell membrane. Its function is as follows. Component of the elastin-associated microfibrils. In Rattus norvegicus (Rat), this protein is Microfibril-associated glycoprotein 3 (Mfap3).